A 564-amino-acid polypeptide reads, in one-letter code: Phenylalanine--tRNA ligase beta subunit (564 aa).

A B5 domain is found at 286-362; that stretch reads YFQNTLEVSV…IGRGLDSFKP (77 aa). Mg(2+) is bound by residues Asp340, Asp346, Glu349, and Glu350.

It belongs to the phenylalanyl-tRNA synthetase beta subunit family. Type 2 subfamily. As to quaternary structure, tetramer of two alpha and two beta subunits. Mg(2+) serves as cofactor.

It is found in the cytoplasm. The enzyme catalyses tRNA(Phe) + L-phenylalanine + ATP = L-phenylalanyl-tRNA(Phe) + AMP + diphosphate + H(+). In Borrelia hermsii (strain HS1 / DAH), this protein is Phenylalanine--tRNA ligase beta subunit.